The primary structure comprises 385 residues: 1-deoxy-D-xylulose 5-phosphate reductoisomerase (385 aa).

NADPH contacts are provided by Thr-10, Gly-11, Ser-12, Ile-13, Lys-37, and Asn-124. Position 125 (Lys-125) interacts with 1-deoxy-D-xylulose 5-phosphate. Glu-126 is a binding site for NADPH. Residue Asp-150 coordinates Mn(2+). 1-deoxy-D-xylulose 5-phosphate is bound by residues Ser-151, Glu-152, Ser-176, and His-199. Glu-152 contributes to the Mn(2+) binding site. An NADPH-binding site is contributed by Gly-205. 1-deoxy-D-xylulose 5-phosphate contacts are provided by Ser-212, Asn-217, Lys-218, and Glu-221. Glu-221 serves as a coordination point for Mn(2+).

It belongs to the DXR family. Mg(2+) is required as a cofactor. Mn(2+) serves as cofactor.

It catalyses the reaction 2-C-methyl-D-erythritol 4-phosphate + NADP(+) = 1-deoxy-D-xylulose 5-phosphate + NADPH + H(+). It participates in isoprenoid biosynthesis; isopentenyl diphosphate biosynthesis via DXP pathway; isopentenyl diphosphate from 1-deoxy-D-xylulose 5-phosphate: step 1/6. Functionally, catalyzes the NADPH-dependent rearrangement and reduction of 1-deoxy-D-xylulose-5-phosphate (DXP) to 2-C-methyl-D-erythritol 4-phosphate (MEP). The sequence is that of 1-deoxy-D-xylulose 5-phosphate reductoisomerase from Clostridium botulinum (strain Okra / Type B1).